The following is an 874-amino-acid chain: Alanine--tRNA ligase (874 aa).

Zn(2+) contacts are provided by histidine 562, histidine 566, cysteine 664, and histidine 668.

It belongs to the class-II aminoacyl-tRNA synthetase family. The cofactor is Zn(2+).

Its subcellular location is the cytoplasm. The enzyme catalyses tRNA(Ala) + L-alanine + ATP = L-alanyl-tRNA(Ala) + AMP + diphosphate. Its function is as follows. Catalyzes the attachment of alanine to tRNA(Ala) in a two-step reaction: alanine is first activated by ATP to form Ala-AMP and then transferred to the acceptor end of tRNA(Ala). Also edits incorrectly charged Ser-tRNA(Ala) and Gly-tRNA(Ala) via its editing domain. The sequence is that of Alanine--tRNA ligase from Shewanella sediminis (strain HAW-EB3).